Here is a 491-residue protein sequence, read N- to C-terminus: NADH-ubiquinone oxidoreductase chain 4 (491 aa).

Helical transmembrane passes span 2 to 22 (IFHKNWLGLIFLLLFLGIINV), 37 to 57 (ALEWSLATLTATLILWAAFDM), 89 to 109 (ISLFFLILTALLTPICILISW), 114 to 134 (FLLKEFLLCLLFLEVLLMGVF), 139 to 159 (LLLFYILFEGILIPMFLLIGV), 169 to 189 (ASYYFFFYTFVGSVFMLLGIF), 215 to 235 (WIFAGFFLSLAVKIPQVPFHI), 245 to 265 (PVSGSVILAGILLKLGGYGFL), 271 to 291 (ILPAATEYFAPFVIMLSVIAI), 308 to 328 (IAYSSVAHMGLVTLGLFTHTI), 332 to 352 (VAAVFMMLAHGLVSSALFIAV), 372 to 392 (FSMPIFVSVFLVLTLTNMAIP), 412 to 432 (IVIGVLAATGMVWSAAYSLYL), and 457 to 477 (IAISPLVILIFILGVLPSLII).

This sequence belongs to the complex I subunit 4 family.

Its subcellular location is the mitochondrion membrane. The catalysed reaction is a ubiquinone + NADH + 5 H(+)(in) = a ubiquinol + NAD(+) + 4 H(+)(out). Core subunit of the mitochondrial membrane respiratory chain NADH dehydrogenase (Complex I) that is believed to belong to the minimal assembly required for catalysis. Complex I functions in the transfer of electrons from NADH to the respiratory chain. The immediate electron acceptor for the enzyme is believed to be ubiquinone. This is NADH-ubiquinone oxidoreductase chain 4 (ND4) from Metridium senile (Brown sea anemone).